We begin with the raw amino-acid sequence, 479 residues long: 6-phosphogluconate dehydrogenase, decarboxylating (479 aa).

Residues 10–15 (GLAVMG), 33–35 (NRS), 75–77 (IKA), and asparagine 103 contribute to the NADP(+) site. Residues asparagine 103 and 129 to 131 (SGG) each bind substrate. The active-site Proton acceptor is the lysine 183. Residue 186-187 (HN) participates in substrate binding. Glutamate 190 functions as the Proton donor in the catalytic mechanism. The substrate site is built by tyrosine 191, lysine 260, arginine 287, arginine 447, and histidine 453.

It belongs to the 6-phosphogluconate dehydrogenase family. Homodimer.

It catalyses the reaction 6-phospho-D-gluconate + NADP(+) = D-ribulose 5-phosphate + CO2 + NADPH. Its pathway is carbohydrate degradation; pentose phosphate pathway; D-ribulose 5-phosphate from D-glucose 6-phosphate (oxidative stage): step 3/3. In terms of biological role, catalyzes the oxidative decarboxylation of 6-phosphogluconate to ribulose 5-phosphate and CO(2), with concomitant reduction of NADP to NADPH. The sequence is that of 6-phosphogluconate dehydrogenase, decarboxylating (gnd) from Chlamydia muridarum (strain MoPn / Nigg).